The chain runs to 293 residues: Exosome complex component RRP4 (293 aa).

A disordered region spans residues 1–20 (MALEMRLPKARKPLSESLGR). An S1 motif domain is found at 79–159 (EVGDIVVGRI…SDGAVSLHTR (81 aa)). S124 bears the Phosphoserine mark.

The protein belongs to the RRP4 family. In terms of assembly, component of the RNA exosome core complex (Exo-9), composed of EXOSC1, EXOSC2, EXOSC3, EXOSC4, EXOSC5, EXOSC6, EXOSC7, EXOSC8 and EXOSC9; within the complex interacts with EXOSC4 and EXOSC7. The catalytically inactive RNA exosome core complex (Exo-9) associates with the catalytic subunit EXOSC10/RRP6. Exo-9 may associate with DIS3 to form the nucleolar exosome complex, or DIS3L to form the cytoplasmic exosome complex. Exo-9 is formed by a hexameric base ring consisting of the heterodimers EXOSC4-EXOSC9, EXOSC5-EXOSC8 and EXOSC6-EXOSC7, and a cap ring consisting of EXOSC1, EXOSC2 and EXOSC3. The RNA exosome complex associates with cofactors C1D/RRP47, MPHOSPH6/MPP6 and MTREX/MTR4. Interacts with GTPBP1. Interacts with ZFP36L1 (via N-terminus).

The protein resides in the cytoplasm. The protein localises to the nucleus. It is found in the nucleolus. Its function is as follows. Non-catalytic component of the RNA exosome complex which has 3'-&gt;5' exoribonuclease activity and participates in a multitude of cellular RNA processing and degradation events. In the nucleus, the RNA exosome complex is involved in proper maturation of stable RNA species such as rRNA, snRNA and snoRNA, in the elimination of RNA processing by-products and non-coding 'pervasive' transcripts, such as antisense RNA species and promoter-upstream transcripts (PROMPTs), and of mRNAs with processing defects, thereby limiting or excluding their export to the cytoplasm. The RNA exosome may be involved in Ig class switch recombination (CSR) and/or Ig variable region somatic hypermutation (SHM) by targeting AICDA deamination activity to transcribed dsDNA substrates. In the cytoplasm, the RNA exosome complex is involved in general mRNA turnover and specifically degrades inherently unstable mRNAs containing AU-rich elements (AREs) within their 3' untranslated regions, and in RNA surveillance pathways, preventing translation of aberrant mRNAs. It seems to be involved in degradation of histone mRNA. The catalytic inactive RNA exosome core complex of 9 subunits (Exo-9) is proposed to play a pivotal role in the binding and presentation of RNA for ribonucleolysis, and to serve as a scaffold for the association with catalytic subunits and accessory proteins or complexes. EXOSC2 as peripheral part of the Exo-9 complex stabilizes the hexameric ring of RNase PH-domain subunits through contacts with EXOSC4 and EXOSC7. This chain is Exosome complex component RRP4 (Exosc2), found in Mus musculus (Mouse).